The sequence spans 170 residues: Peptide deformylase (170 aa).

2 residues coordinate Fe cation: cysteine 91 and histidine 133. Glutamate 134 is an active-site residue. Histidine 137 serves as a coordination point for Fe cation.

It belongs to the polypeptide deformylase family. The cofactor is Fe(2+).

It carries out the reaction N-terminal N-formyl-L-methionyl-[peptide] + H2O = N-terminal L-methionyl-[peptide] + formate. In terms of biological role, removes the formyl group from the N-terminal Met of newly synthesized proteins. Requires at least a dipeptide for an efficient rate of reaction. N-terminal L-methionine is a prerequisite for activity but the enzyme has broad specificity at other positions. This chain is Peptide deformylase, found in Yersinia pseudotuberculosis serotype O:1b (strain IP 31758).